A 455-amino-acid chain; its full sequence is Probable pectate lyase 6 (455 aa).

The N-terminal stretch at 1-25 (MVNLGSYVFVFVALSLTVVVPSVQA) is a signal peptide. N-linked (GlcNAc...) asparagine glycosylation is found at Asn-55 and Asn-75. Residues Asp-247, Asp-271, and Asp-275 each coordinate Ca(2+). Residue Arg-327 is part of the active site.

It belongs to the polysaccharide lyase 1 family. Ca(2+) serves as cofactor.

The enzyme catalyses Eliminative cleavage of (1-&gt;4)-alpha-D-galacturonan to give oligosaccharides with 4-deoxy-alpha-D-galact-4-enuronosyl groups at their non-reducing ends.. It participates in glycan metabolism; pectin degradation; 2-dehydro-3-deoxy-D-gluconate from pectin: step 2/5. This chain is Probable pectate lyase 6, found in Arabidopsis thaliana (Mouse-ear cress).